The primary structure comprises 469 residues: Ubiquitin carboxyl-terminal hydrolase MINDY-1 (469 aa).

The disordered stretch occupies residues 1–85; the sequence is MEHHQPEDPA…APPGPTLGTL (85 aa). A compositionally biased stretch (basic and acidic residues) spans 34–53; the sequence is HPQDTDARDADGEAGEREPA. Residue Ser103 is modified to Phosphoserine. Cys137 serves as the catalytic Nucleophile. Residue His319 is the Proton acceptor of the active site. Positions 388–426 are ubiquitin-binding domain (UBD); it reads QVDQDYLIALSLQQQQPRGTLGLTDLELAQQLQQEEYQQ. The segment at 428–469 is disordered; the sequence is QAAQPVWMRTRALSPQGRGATSGRPAGERRQRPKHESDCILL. Ser441 bears the Phosphoserine mark. The span at 453 to 469 shows a compositional bias: basic and acidic residues; the sequence is AGERRQRPKHESDCILL.

Belongs to the MINDY deubiquitinase family. FAM63 subfamily.

It catalyses the reaction Thiol-dependent hydrolysis of ester, thioester, amide, peptide and isopeptide bonds formed by the C-terminal Gly of ubiquitin (a 76-residue protein attached to proteins as an intracellular targeting signal).. Hydrolase that can specifically remove 'Lys-48'-linked conjugated ubiquitin from proteins. Has exodeubiquitinase activity and has a preference for long polyubiquitin chains. May play a regulatory role at the level of protein turnover. The polypeptide is Ubiquitin carboxyl-terminal hydrolase MINDY-1 (MINDY1) (Pongo abelii (Sumatran orangutan)).